The chain runs to 201 residues: Imidazoleglycerol-phosphate dehydratase (201 aa).

This sequence belongs to the imidazoleglycerol-phosphate dehydratase family.

It is found in the cytoplasm. The enzyme catalyses D-erythro-1-(imidazol-4-yl)glycerol 3-phosphate = 3-(imidazol-4-yl)-2-oxopropyl phosphate + H2O. The protein operates within amino-acid biosynthesis; L-histidine biosynthesis; L-histidine from 5-phospho-alpha-D-ribose 1-diphosphate: step 6/9. The sequence is that of Imidazoleglycerol-phosphate dehydratase from Prochlorococcus marinus (strain AS9601).